The chain runs to 694 residues: Soluble starch synthase 2-2, chloroplastic/amyloplastic (694 aa).

A chloroplast-targeting transit peptide spans 1-15 (MSGAIASSPAATLFL). Residues 93 to 197 (KADHVEDSVS…DSENKESGPL (105 aa)) are disordered. Positions 127–142 (APVSKPKVDPSVPASK) are enriched in low complexity. Positions 156–176 (AALDKKEDVGVAEPLEAKADA) are enriched in basic and acidic residues. The segment covering 177-186 (GGDAGAVSSA) has biased composition (low complexity). Lys-217 is an ADP-alpha-D-glucose binding site.

Belongs to the glycosyltransferase 1 family. Bacterial/plant glycogen synthase subfamily. Expressed in leaves and weakly in endosperm and roots.

The protein localises to the plastid. The protein resides in the amyloplast. Its subcellular location is the chloroplast. It catalyses the reaction [(1-&gt;4)-alpha-D-glucosyl](n) + ADP-alpha-D-glucose = [(1-&gt;4)-alpha-D-glucosyl](n+1) + ADP + H(+). Its pathway is glycan biosynthesis; starch biosynthesis. In terms of biological role, may contribute to the deposition of transient starch in chloroplasts of leaves. The polypeptide is Soluble starch synthase 2-2, chloroplastic/amyloplastic (SSII-2) (Oryza sativa subsp. japonica (Rice)).